The sequence spans 244 residues: 14-3-3 protein homolog 1 (244 aa).

Belongs to the 14-3-3 family.

In Echinococcus multilocularis (Fox tapeworm), this protein is 14-3-3 protein homolog 1.